A 327-amino-acid polypeptide reads, in one-letter code: tRNA uridine(34) hydroxylase (327 aa).

The 95-residue stretch at 123-217 (SDPEVLLVDT…YLEEVKLEES (95 aa)) folds into the Rhodanese domain. The active-site Cysteine persulfide intermediate is the cysteine 177.

This sequence belongs to the TrhO family.

The enzyme catalyses uridine(34) in tRNA + AH2 + O2 = 5-hydroxyuridine(34) in tRNA + A + H2O. Functionally, catalyzes oxygen-dependent 5-hydroxyuridine (ho5U) modification at position 34 in tRNAs. The chain is tRNA uridine(34) hydroxylase from Shewanella pealeana (strain ATCC 700345 / ANG-SQ1).